The sequence spans 183 residues: Acireductone dioxygenase (183 aa).

The Fe(2+) site is built by His-95, His-97, Glu-101, and His-139. Ni(2+) is bound by residues His-95, His-97, Glu-101, and His-139.

This sequence belongs to the acireductone dioxygenase (ARD) family. As to quaternary structure, monomer. Fe(2+) is required as a cofactor. Requires Ni(2+) as cofactor.

It catalyses the reaction 1,2-dihydroxy-5-(methylsulfanyl)pent-1-en-3-one + O2 = 3-(methylsulfanyl)propanoate + CO + formate + 2 H(+). The catalysed reaction is 1,2-dihydroxy-5-(methylsulfanyl)pent-1-en-3-one + O2 = 4-methylsulfanyl-2-oxobutanoate + formate + 2 H(+). Its pathway is amino-acid biosynthesis; L-methionine biosynthesis via salvage pathway; L-methionine from S-methyl-5-thio-alpha-D-ribose 1-phosphate: step 5/6. Its function is as follows. Catalyzes 2 different reactions between oxygen and the acireductone 1,2-dihydroxy-3-keto-5-methylthiopentene (DHK-MTPene) depending upon the metal bound in the active site. Fe-containing acireductone dioxygenase (Fe-ARD) produces formate and 2-keto-4-methylthiobutyrate (KMTB), the alpha-ketoacid precursor of methionine in the methionine recycle pathway. Ni-containing acireductone dioxygenase (Ni-ARD) produces methylthiopropionate, carbon monoxide and formate, and does not lie on the methionine recycle pathway. The sequence is that of Acireductone dioxygenase from Hydrogenobaculum sp. (strain Y04AAS1).